Reading from the N-terminus, the 161-residue chain is Glutaredoxin-2, mitochondrial (161 aa).

Residues 1 to 19 (MLWRRAALAGTRLVWSRSG) constitute a mitochondrion transit peptide. Residue serine 20 is modified to Phosphoserine. The region spanning 54–154 (VNQIQETISD…PLVHQCYLKK (101 aa)) is the Glutaredoxin domain. Cysteine 65 contacts [2Fe-2S] cluster. Lysine 71 is a binding site for glutathione. Cysteine 74 carries the post-translational modification S-glutathionyl cysteine; alternate. A disulfide bridge connects residues cysteine 74 and cysteine 77. Glutathione is bound by residues glutamine 106 and valine 118. Cysteine 150 is a binding site for [2Fe-2S] cluster.

This sequence belongs to the glutaredoxin family. As to quaternary structure, monomer; active form. Homodimer; inactive form. The homodimer is probably linked by 1 2Fe-2S cluster.

It is found in the mitochondrion. Its activity is regulated as follows. The 2Fe-2S present in the homodimer leads to inactivation of the enzyme. The 2Fe-2S may serve as a redox sensor: the presence of one-electron oxidants or reductants leading to the loss of the 2Fe-2S cluster, subsequent monomerization and activation of the enzyme. Glutathione-dependent oxidoreductase that facilitates the maintenance of mitochondrial redox homeostasis upon induction of apoptosis by oxidative stress. Involved in response to hydrogen peroxide and regulation of apoptosis caused by oxidative stress. Acts as a very efficient catalyst of monothiol reactions because of its high affinity for protein glutathione-mixed disulfides. Can receive electrons not only from glutathione (GSH), but also from thioredoxin reductase supporting both monothiol and dithiol reactions. Efficiently catalyzes both glutathionylation and deglutathionylation of mitochondrial complex I, which in turn regulates the superoxide production by the complex. Overexpression decreases the susceptibility to apoptosis and prevents loss of cardiolipin and cytochrome c release. The sequence is that of Glutaredoxin-2, mitochondrial (GLRX2) from Pongo abelii (Sumatran orangutan).